We begin with the raw amino-acid sequence, 206 residues long: N-(5'-phosphoribosyl)anthranilate isomerase (206 aa).

Belongs to the TrpF family.

It carries out the reaction N-(5-phospho-beta-D-ribosyl)anthranilate = 1-(2-carboxyphenylamino)-1-deoxy-D-ribulose 5-phosphate. Its pathway is amino-acid biosynthesis; L-tryptophan biosynthesis; L-tryptophan from chorismate: step 3/5. This is N-(5'-phosphoribosyl)anthranilate isomerase from Citrifermentans bemidjiense (strain ATCC BAA-1014 / DSM 16622 / JCM 12645 / Bem) (Geobacter bemidjiensis).